The sequence spans 416 residues: MANSWDQLGEIASVAQLTGIDALKLIGMIVNAANTARMHKKNCRQFAHHLKLIRNLLEQIKNSEMNQRSEILEPLQGLDDALRRSYILVKSCQEKSYLYLLAMGWNIVNQFEKAQNEIDLFLKIVPLINMADNARIRERLEAIERDQREYTLDEEDRKVQDVILKQESTREAATSVLKKTLSRSYPNMGFCEALKTEEEKLQLELQRSRARYDADQCEVIQRLIDVTQTAATVEPNLEKVLTKKEELTSSKKRDDLYDTDSSSIRADSRSTSYVSSGHELLSGRSLQHRGNWHADLLDCCSEPCLCLKTLFFPCGTLAKISTVATSRQISSTEVCKNLIVYSLILSCCCYTCCIRKKLRKTLNITGGCIDDFLSHLMCCCCALVQELREVEIHRASYGTEKSNKEMSPPTPQFMEE.

The stretch at 191–219 forms a coiled coil; sequence CEALKTEEEKLQLELQRSRARYDADQCEV. A helical membrane pass occupies residues 338 to 354; it reads LIVYSLILSCCCYTCCI.

As to expression, expressed in roots, leaves, stems, flowers and siliques. In the root, high levels of expression in vascular tissues, in the stele and endodermis, but no expression in the cortex, epidermis, root cap, promeristem and adjacent elongation zone of the primary root. Not expressed in root hairs. Detected in shoot apical meristem, leaf mesophyll cells and vascular tissues, upper half of inflorescence, but not in petioles of rosette leaves.

The protein resides in the cell membrane. With respect to regulation, inhibited by GdCl(3), but not by verapamil. Its function is as follows. Calcium-permeable stretch-activated channel component. Probably involved in mechanosensing and in mechano-stimulated calcium uptake mechanism. The sequence is that of Protein MID1-COMPLEMENTING ACTIVITY 2 (MCA2) from Arabidopsis thaliana (Mouse-ear cress).